The chain runs to 117 residues: Protein RALF-like 32 (117 aa).

Positions 1 to 26 are cleaved as a signal peptide; the sequence is MEIKPSRIFSTITIFFLCLLLAHVTS. A propeptide spans 27–64 (removed in mature form); sequence KASSSSLCNGSVAECSSMVETEEMSVIMESWSSQRLTE. Asparagine 35 is a glycosylation site (N-linked (GlcNAc...) asparagine). A disordered region spans residues 77-107; that stretch reads RNQPACDGGKRGESYSTQCLPPPSNPYSRGC. 2 disulfide bridges follow: cysteine 82-cysteine 95 and cysteine 107-cysteine 113.

Belongs to the plant rapid alkalinization factor (RALF) family. In terms of processing, proteolytically cleaved, probably by S1P, a subtilisin-like serine protease (subtilase).

The protein resides in the secreted. Functionally, cell signaling peptide that may regulate plant stress, growth, and development. Mediates a rapid alkalinization of extracellular space by mediating a transient increase in the cytoplasmic Ca(2+) concentration leading to a calcium-dependent signaling events through a cell surface receptor and a concomitant activation of some intracellular mitogen-activated protein kinases. This Arabidopsis thaliana (Mouse-ear cress) protein is Protein RALF-like 32 (RALFL32).